A 91-amino-acid chain; its full sequence is Small ribosomal subunit protein uS19 (91 aa).

It belongs to the universal ribosomal protein uS19 family.

Its function is as follows. Protein S19 forms a complex with S13 that binds strongly to the 16S ribosomal RNA. In Bordetella bronchiseptica (strain ATCC BAA-588 / NCTC 13252 / RB50) (Alcaligenes bronchisepticus), this protein is Small ribosomal subunit protein uS19.